A 474-amino-acid polypeptide reads, in one-letter code: Dol-P-Glc:Glc(2)Man(9)GlcNAc(2)-PP-Dol alpha-1,2-glucosyltransferase (474 aa).

At 1-6 (MAQLEG) the chain is on the cytoplasmic side. The chain crosses the membrane as a helical span at residues 7-27 (YYFSAALSCTFLVSCLLFSAF). The Extracellular portion of the chain corresponds to 28 to 64 (SRALREPYMDEIFHLPQAQRYCEGRFSLSQWDPMITT). Residues 65 to 85 (LPGLYLVSVGVVKPASWLLGW) form a helical membrane-spanning segment. Over 86-97 (SEHVICSIGVLR) the chain is Cytoplasmic. Residues 98-118 (FVNLLFSVGNFYLLYLLFRKV) form a helical membrane-spanning segment. Topologically, residues 119 to 126 (QPRNKASS) are extracellular. Residues 127–147 (SIQRILSTLTLAVFPTLYFFN) traverse the membrane as a helical segment. The Cytoplasmic portion of the chain corresponds to 148-150 (FLY). A helical membrane pass occupies residues 151–171 (YTEAGSVFFTLFAYLMCLYGN). The Extracellular segment spans residues 172–175 (HRTS). Residues 176 to 196 (ALLGFCGFMFRQTNIIWAAFC) traverse the membrane as a helical segment. Residues 197-256 (AGHLIAQKCSEAWKIELQKKKEERLAPTKGPLSELRRVLQFLLVYAMSLKNLRMLFLLTW) are Cytoplasmic-facing. Residues 257–277 (PYVLLLLAFFAFVVVNGGIVV) form a helical membrane-spanning segment. Topologically, residues 278-283 (GDRSSH) are extracellular. The helical transmembrane segment at 284–304 (EACLHFPQLFYFFSFTAFFSF) threads the bilayer. Residues 305-317 (PHLLSLTKVKTFL) are Cytoplasmic-facing. The helical transmembrane segment at 318–338 (SLVWKRRVQFSVVTLVSILLV) threads the bilayer. Residues 339–365 (WKFTYVHKYLLADNRHYTFYVWKRVFQ) are Extracellular-facing. Residues 366–386 (RHEVVKYLLVPAYIFAGWAIA) form a helical membrane-spanning segment. Residues 387–392 (DSLKAK) are Cytoplasmic-facing. The chain crosses the membrane as a helical span at residues 393–413 (SIFWNLMFFVCLVASTVPQKL). The Extracellular portion of the chain corresponds to 414 to 436 (LEFRYFILPYIIYRLNIPLPPIS). Residues 437–457 (RLVCELGCYTVVNFVTFYIFL) form a helical membrane-spanning segment. At 458–473 (NKTFQWPNSQDIQRFM) the chain is on the cytoplasmic side.

The protein belongs to the ALG10 glucosyltransferase family. As to quaternary structure, interacts with KCNH1; may regulate KCNH1, possibly by regulating its N-glycosylation. Interacts with KCNH2; may reduce KCNH2 sensitivity to classic proarrhythmic drug blockade, possibly by regulating its N-glycosylation.

The protein localises to the endoplasmic reticulum membrane. It carries out the reaction an alpha-D-Glc-(1-&gt;3)-alpha-D-Glc-(1-&gt;3)-alpha-D-Man-(1-&gt;2)-alpha-D-Man-(1-&gt;2)-alpha-D-Man-(1-&gt;3)-[alpha-D-Man-(1-&gt;2)-alpha-D-Man-(1-&gt;3)-[alpha-D-Man-(1-&gt;2)-alpha-D-Man-(1-&gt;6)]-alpha-D-Man-(1-&gt;6)]-beta-D-Man-(1-&gt;4)-beta-D-GlcNAc-(1-&gt;4)-alpha-D-GlcNAc-diphospho-di-trans,poly-cis-dolichol + a di-trans,poly-cis-dolichyl beta-D-glucosyl phosphate = a alpha-D-Glc-(1-&gt;2)-alpha-D-Glc-(1-&gt;3)-alpha-D-Glc-(1-&gt;3)-alpha-D-Man-(1-&gt;2)-alpha-D-Man-(1-&gt;2)-alpha-D-Man-(1-&gt;3)-[alpha-D-Man-(1-&gt;2)-alpha-D-Man-(1-&gt;3)-[alpha-D-Man-(1-&gt;2)-alpha-D-Man-(1-&gt;6)]-alpha-D-Man-(1-&gt;6)]-beta-D-Man-(1-&gt;4)-beta-D-GlcNAc-(1-&gt;4)-alpha-D-GlcNAc-diphospho-di-trans,poly-cis-dolichol + a di-trans,poly-cis-dolichyl phosphate + H(+). It participates in protein modification; protein glycosylation. Dol-P-Glc:Glc(2)Man(9)GlcNAc(2)-PP-Dol alpha-1,2-glucosyltransferase that operates in the biosynthetic pathway of dolichol-linked oligosaccharides, the glycan precursors employed in protein asparagine (N)-glycosylation. The assembly of dolichol-linked oligosaccharides begins on the cytosolic side of the endoplasmic reticulum membrane and finishes in its lumen. The sequential addition of sugars to dolichol pyrophosphate produces dolichol-linked oligosaccharides containing fourteen sugars, including two GlcNAcs, nine mannoses and three glucoses. Once assembled, the oligosaccharide is transferred from the lipid to nascent proteins by oligosaccharyltransferases. In the lumen of the endoplasmic reticulum, adds the third and last glucose residue from dolichyl phosphate glucose (Dol-P-Glc) onto the lipid-linked oligosaccharide intermediate Glc(2)Man(9)GlcNAc(2)-PP-Dol to produce Glc(3)Man(9)GlcNAc(2)-PP-Dol. In Mus musculus (Mouse), this protein is Dol-P-Glc:Glc(2)Man(9)GlcNAc(2)-PP-Dol alpha-1,2-glucosyltransferase.